We begin with the raw amino-acid sequence, 159 residues long: Vasotocin-neurophysin VT (159 aa).

A signal peptide spans 1 to 17 (TAPVPACFLCLLALSSA). Residues Cys18 and Cys23 are joined by a disulfide bond. The residue at position 26 (Gly26) is a Glycine amide. Disulfide bonds link Cys39–Cys83, Cys42–Cys56, Cys50–Cys73, Cys57–Cys63, Cys90–Cys102, Cys96–Cys114, and Cys103–Cys108. Asn129 carries an N-linked (GlcNAc...) asparagine glycan.

This sequence belongs to the vasopressin/oxytocin family. Seven disulfide bonds are present in neurophysin.

It is found in the secreted. Vasotocin is an antidiuretic hormone. The chain is Vasotocin-neurophysin VT from Bufo japonicus (Japanese common toad).